The sequence spans 233 residues: Uridylate kinase (233 aa).

ATP-binding positions include 8-11 (KLSG), G51, and R55. UMP is bound by residues D68 and 129–136 (TSNPFFTT). ATP is bound by residues T156, Y162, and D165.

This sequence belongs to the UMP kinase family. As to quaternary structure, homohexamer.

It localises to the cytoplasm. It carries out the reaction UMP + ATP = UDP + ADP. It participates in pyrimidine metabolism; CTP biosynthesis via de novo pathway; UDP from UMP (UMPK route): step 1/1. Its activity is regulated as follows. Inhibited by UTP. Catalyzes the reversible phosphorylation of UMP to UDP. The chain is Uridylate kinase from Thermosipho melanesiensis (strain DSM 12029 / CIP 104789 / BI429).